The primary structure comprises 449 residues: MLSVAILAAGKGTRMESSIPKVLHKISGKSLLQRVIDSCVELNPDQIFVITGHKSKEVQESIPDNKKIHFVIQEPQSGTGHAIQILCREVKKNEGKLLVLNGDVPLITPETLKNLLNLHDSKNADVSLITTKKKNPHGYGRVFLKGDFIERIVEEKDCNNQERLNLLINAGVYCFNWENLSEIISTLQSNNNQNEIYLTDTVSMLKNALSLEIEDNGELQGINNRIQLSKCEEIIQNSIKEKHMLNGVTFINQASCSISEEAEIGKDVIIEANTHIRGSTKIFNSCVIGPNTFIENSNIGLHCEISNSTVYDSQIMDHIKVGPYSHIRPKSKIYSYSKIGNFVEIKNSQLEEESKVNHLSYIGDSIIGRSTNIGAGTITANFDGQKKHQTKIGKNSSIGANTVLVAPINLGESVTTGAGSVITKDSKDNSLAISRTKQVNIDNWERKKP.

Residues methionine 1–arginine 225 form a pyrophosphorylase region. UDP-N-acetyl-alpha-D-glucosamine is bound by residues leucine 7 to glycine 10, lysine 21, glutamine 73, and glycine 78 to threonine 79. Aspartate 103 contacts Mg(2+). UDP-N-acetyl-alpha-D-glucosamine contacts are provided by glycine 140, glutamate 154, asparagine 169, and asparagine 223. Asparagine 223 is a binding site for Mg(2+). The segment at isoleucine 226 to asparagine 246 is linker. The N-acetyltransferase stretch occupies residues glycine 247 to proline 449. 2 residues coordinate UDP-N-acetyl-alpha-D-glucosamine: arginine 328 and lysine 346. Catalysis depends on histidine 358, which acts as the Proton acceptor. 2 residues coordinate UDP-N-acetyl-alpha-D-glucosamine: tyrosine 361 and asparagine 372. Acetyl-CoA is bound by residues alanine 375, alanine 418, and arginine 435.

This sequence in the N-terminal section; belongs to the N-acetylglucosamine-1-phosphate uridyltransferase family. The protein in the C-terminal section; belongs to the transferase hexapeptide repeat family. Homotrimer. Mg(2+) is required as a cofactor.

The protein resides in the cytoplasm. The catalysed reaction is alpha-D-glucosamine 1-phosphate + acetyl-CoA = N-acetyl-alpha-D-glucosamine 1-phosphate + CoA + H(+). The enzyme catalyses N-acetyl-alpha-D-glucosamine 1-phosphate + UTP + H(+) = UDP-N-acetyl-alpha-D-glucosamine + diphosphate. Its pathway is nucleotide-sugar biosynthesis; UDP-N-acetyl-alpha-D-glucosamine biosynthesis; N-acetyl-alpha-D-glucosamine 1-phosphate from alpha-D-glucosamine 6-phosphate (route II): step 2/2. It participates in nucleotide-sugar biosynthesis; UDP-N-acetyl-alpha-D-glucosamine biosynthesis; UDP-N-acetyl-alpha-D-glucosamine from N-acetyl-alpha-D-glucosamine 1-phosphate: step 1/1. The protein operates within bacterial outer membrane biogenesis; LPS lipid A biosynthesis. Functionally, catalyzes the last two sequential reactions in the de novo biosynthetic pathway for UDP-N-acetylglucosamine (UDP-GlcNAc). The C-terminal domain catalyzes the transfer of acetyl group from acetyl coenzyme A to glucosamine-1-phosphate (GlcN-1-P) to produce N-acetylglucosamine-1-phosphate (GlcNAc-1-P), which is converted into UDP-GlcNAc by the transfer of uridine 5-monophosphate (from uridine 5-triphosphate), a reaction catalyzed by the N-terminal domain. The sequence is that of Bifunctional protein GlmU from Prochlorococcus marinus (strain MIT 9312).